An 850-amino-acid polypeptide reads, in one-letter code: Endoribonuclease ysh-1 (850 aa).

The Zn(2+) site is built by His-83, His-85, Asp-87, His-88, His-173, and Asp-194. The active-site Proton donor is His-442. His-464 contributes to the Zn(2+) binding site. 2 disordered regions span residues 685-708 (VKRSATKNPHTHSPLPADKNPHSH) and 732-784 (SPIV…EQQL). Polar residues predominate over residues 744 to 754 (PTTKAITSPSE). The segment covering 755–766 (ETAKSSDVKSDA) has biased composition (basic and acidic residues). The segment covering 767-781 (DADASMDVSEEDEDE) has biased composition (acidic residues).

It belongs to the metallo-beta-lactamase superfamily. RNA-metabolizing metallo-beta-lactamase-like family. CPSF2/YSH1 subfamily.

It localises to the nucleus. In terms of biological role, component of the cleavage factor I (CF I) involved in pre-mRNA 3'-end processing. This Neurospora crassa (strain ATCC 24698 / 74-OR23-1A / CBS 708.71 / DSM 1257 / FGSC 987) protein is Endoribonuclease ysh-1 (ysh-1).